The following is a 169-amino-acid chain: Aspartic protease inhibitor 3 (169 aa).

N-linked (GlcNAc...) asparagine glycosylation is present at N1. Intrachain disulfides connect C30/C75 and C124/C134.

This sequence belongs to the protease inhibitor I3 (leguminous Kunitz-type inhibitor) family.

It is found in the vacuole. Inhibitor of cathepsin D (aspartic protease). May also inhibit trypsin and chymotrypsin (serine proteases). Protects the plant by inhibiting proteases of invading organisms. The protein is Aspartic protease inhibitor 3 of Solanum tuberosum (Potato).